Consider the following 150-residue polypeptide: Probable histone H2A.5 (150 aa).

Low complexity predominate over residues 1-12 (MESSQATTKPTR). 2 disordered regions span residues 1 to 28 (MESSQATTKPTRGAGGRKGGDRKKSVSK) and 130 to 150 (KSTASSSQAEKASATKSPKKA). Polar residues predominate over residues 131–150 (STASSSQAEKASATKSPKKA). Residue Ser-146 is modified to Phosphoserine. The SPKK motif signature appears at 146 to 149 (SPKK).

This sequence belongs to the histone H2A family. As to quaternary structure, the nucleosome is a histone octamer containing two molecules each of H2A, H2B, H3 and H4 assembled in one H3-H4 heterotetramer and two H2A-H2B heterodimers. The octamer wraps approximately 147 bp of DNA. Post-translationally, not ubiquitinated.

Its subcellular location is the nucleus. The protein localises to the chromosome. Core component of nucleosome. Nucleosomes wrap and compact DNA into chromatin, limiting DNA accessibility to the cellular machineries which require DNA as a template. Histones thereby play a central role in transcription regulation, DNA repair, DNA replication and chromosomal stability. DNA accessibility is regulated via a complex set of post-translational modifications of histones, also called histone code, and nucleosome remodeling. In Arabidopsis thaliana (Mouse-ear cress), this protein is Probable histone H2A.5.